Reading from the N-terminus, the 640-residue chain is Large subunit GTPase 1 homolog (640 aa).

One can recognise a CP-type G domain in the interval 165-426; sequence WRQLWRVIER…LCDCPGLVMP (262 aa). A GTP-binding site is contributed by 213–216; sequence NKAD. Positions 251–341 are disordered; the sequence is AEERGEDAMD…ESTATSSFYN (91 aa). Composition is skewed to acidic residues over residues 253-270, 290-304, and 320-331; these read ERGE…TEEE, EKDE…EGED, and ESGDEDHAEENP. Polar residues predominate over residues 332–341; that stretch reads ESTATSSFYN. GTP contacts are provided by residues 375-382 and 419-422; these read GYPNVGKS and DCPG. The tract at residues 602–640 is disordered; the sequence is GPVEAGKANTEQQAGKPWKKHGNRNKKEKVRRLNKHLDA. Basic residues predominate over residues 618–640; the sequence is PWKKHGNRNKKEKVRRLNKHLDA.

Belongs to the TRAFAC class YlqF/YawG GTPase family. LSG1 subfamily.

It is found in the cytoplasm. Its subcellular location is the endoplasmic reticulum. The protein resides in the nucleus. It localises to the cajal body. It carries out the reaction GTP + H2O = GDP + phosphate + H(+). Functionally, functions as a GTPase. May act by mediating the release of NMD3 from the 60S ribosomal subunit after export into the cytoplasm during the 60S ribosomal subunit maturation. This chain is Large subunit GTPase 1 homolog, found in Danio rerio (Zebrafish).